Here is a 64-residue protein sequence, read N- to C-terminus: Large ribosomal subunit protein uL29 (64 aa).

This sequence belongs to the universal ribosomal protein uL29 family.

This Lacticaseibacillus paracasei (strain ATCC 334 / BCRC 17002 / CCUG 31169 / CIP 107868 / KCTC 3260 / NRRL B-441) (Lactobacillus paracasei) protein is Large ribosomal subunit protein uL29.